A 24-amino-acid chain; its full sequence is Brevinin-1Ra (24 aa).

Residues cysteine 18 and cysteine 24 are joined by a disulfide bond.

Expressed by the skin glands.

Its subcellular location is the secreted. Its function is as follows. Antimicrobial peptide. This chain is Brevinin-1Ra, found in Pelophylax ridibundus (Marsh frog).